The chain runs to 323 residues: tRNA N6-adenosine threonylcarbamoyltransferase (323 aa).

Fe cation contacts are provided by His106, His110, and Tyr127. Substrate contacts are provided by residues Tyr127–Ala131, Asp159, Gly172, Glu176, and Asn255. Asp283 is a binding site for Fe cation.

This sequence belongs to the KAE1 / TsaD family. As to quaternary structure, monomer. Component of the KEOPS complex that consists of Kae1, Bud32, Cgi121 and Pcc1; the whole complex dimerizes. The cofactor is Fe(2+).

The protein resides in the cytoplasm. It catalyses the reaction L-threonylcarbamoyladenylate + adenosine(37) in tRNA = N(6)-L-threonylcarbamoyladenosine(37) in tRNA + AMP + H(+). Required for the formation of a threonylcarbamoyl group on adenosine at position 37 (t(6)A37) in tRNAs that read codons beginning with adenine. Is a component of the KEOPS complex that is probably involved in the transfer of the threonylcarbamoyl moiety of threonylcarbamoyl-AMP (TC-AMP) to the N6 group of A37. Kae1 likely plays a direct catalytic role in this reaction, but requires other protein(s) of the complex to fulfill this activity. The polypeptide is tRNA N6-adenosine threonylcarbamoyltransferase (Methanocella arvoryzae (strain DSM 22066 / NBRC 105507 / MRE50)).